Reading from the N-terminus, the 1551-residue chain is Pentafunctional AROM polypeptide (1551 aa).

The 3-dehydroquinate synthase stretch occupies residues 1 to 379; that stretch reads MSIEKVPILG…YQLKAHEVSK (379 aa). NAD(+)-binding positions include 42–44, 80–83, 111–113, and Asp-116; these read DTN, ENNK, and GGV. A 7-phospho-2-dehydro-3-deoxy-D-arabino-heptonate-binding site is contributed by Arg-127. An NAD(+)-binding site is contributed by 136-137; the sequence is TT. 2 residues coordinate 7-phospho-2-dehydro-3-deoxy-D-arabino-heptonate: Asp-143 and Lys-149. Residue Lys-158 coordinates NAD(+). 7-phospho-2-dehydro-3-deoxy-D-arabino-heptonate is bound at residue Asn-159. Residues 176 to 179 and Asn-187 contribute to the NAD(+) site; that span reads YLES. Glu-191 contributes to the Zn(2+) binding site. 7-phospho-2-dehydro-3-deoxy-D-arabino-heptonate is bound by residues 191-194 and Lys-243; that span reads EVVK. The active-site Proton acceptor; for 3-dehydroquinate synthase activity is Glu-253. 7-phospho-2-dehydro-3-deoxy-D-arabino-heptonate contacts are provided by residues 257–261 and His-264; that span reads RNLLN. Residue His-264 coordinates Zn(2+). His-268 (proton acceptor; for 3-dehydroquinate synthase activity) is an active-site residue. 2 residues coordinate 7-phospho-2-dehydro-3-deoxy-D-arabino-heptonate: His-280 and Lys-351. His-280 provides a ligand contact to Zn(2+). Residues 392 to 838 are EPSP synthase; it reads VHPFKQPPQE…WDILHSKFNI (447 aa). The segment at 858-1048 is shikimate kinase; sequence DKSIIIIGMR…IPSGRSAALS (191 aa). 865–872 contributes to the ATP binding site; that stretch reads GMRGTGKS. The tract at residues 1049–1258 is 3-dehydroquinase; it reads LTVPDLNAIS…NEDGLLTIKE (210 aa). Lys-1194 serves as the catalytic Schiff-base intermediate with substrate; for 3-dehydroquinate dehydratase activity. The tract at residues 1271–1551 is shikimate dehydrogenase; the sequence is AKKFWVIGSP…DVIHRAVVEE (281 aa).

It in the N-terminal section; belongs to the sugar phosphate cyclases superfamily. Dehydroquinate synthase family. The protein in the 2nd section; belongs to the EPSP synthase family. This sequence in the 3rd section; belongs to the shikimate kinase family. In the 4th section; belongs to the type-I 3-dehydroquinase family. It in the C-terminal section; belongs to the shikimate dehydrogenase family. As to quaternary structure, homodimer. Zn(2+) is required as a cofactor.

The protein resides in the cytoplasm. It catalyses the reaction 7-phospho-2-dehydro-3-deoxy-D-arabino-heptonate = 3-dehydroquinate + phosphate. The enzyme catalyses 3-dehydroquinate = 3-dehydroshikimate + H2O. The catalysed reaction is shikimate + NADP(+) = 3-dehydroshikimate + NADPH + H(+). It carries out the reaction shikimate + ATP = 3-phosphoshikimate + ADP + H(+). It catalyses the reaction 3-phosphoshikimate + phosphoenolpyruvate = 5-O-(1-carboxyvinyl)-3-phosphoshikimate + phosphate. Its pathway is metabolic intermediate biosynthesis; chorismate biosynthesis; chorismate from D-erythrose 4-phosphate and phosphoenolpyruvate: step 2/7. It participates in metabolic intermediate biosynthesis; chorismate biosynthesis; chorismate from D-erythrose 4-phosphate and phosphoenolpyruvate: step 3/7. It functions in the pathway metabolic intermediate biosynthesis; chorismate biosynthesis; chorismate from D-erythrose 4-phosphate and phosphoenolpyruvate: step 4/7. The protein operates within metabolic intermediate biosynthesis; chorismate biosynthesis; chorismate from D-erythrose 4-phosphate and phosphoenolpyruvate: step 5/7. Its pathway is metabolic intermediate biosynthesis; chorismate biosynthesis; chorismate from D-erythrose 4-phosphate and phosphoenolpyruvate: step 6/7. Functionally, the AROM polypeptide catalyzes 5 consecutive enzymatic reactions in prechorismate polyaromatic amino acid biosynthesis. This chain is Pentafunctional AROM polypeptide, found in Candida tropicalis (strain ATCC MYA-3404 / T1) (Yeast).